We begin with the raw amino-acid sequence, 60 residues long: Small integral membrane protein 3 (60 aa).

Residues 20–40 (IWAIVLIILATVVIMTSLFLC) form a helical membrane-spanning segment.

The protein resides in the membrane. The sequence is that of Small integral membrane protein 3 (Smim3) from Rattus norvegicus (Rat).